A 255-amino-acid polypeptide reads, in one-letter code: Type III pantothenate kinase (255 aa).

ATP is bound at residue 6–13 (DIGNTNTV). Substrate is bound by residues Tyr-100 and 107-110 (GADR). Catalysis depends on Asp-109, which acts as the Proton acceptor. Asp-129 is a binding site for K(+). An ATP-binding site is contributed by Thr-132. Thr-185 contributes to the substrate binding site.

This sequence belongs to the type III pantothenate kinase family. Homodimer. NH4(+) serves as cofactor. It depends on K(+) as a cofactor.

Its subcellular location is the cytoplasm. The enzyme catalyses (R)-pantothenate + ATP = (R)-4'-phosphopantothenate + ADP + H(+). It functions in the pathway cofactor biosynthesis; coenzyme A biosynthesis; CoA from (R)-pantothenate: step 1/5. Catalyzes the phosphorylation of pantothenate (Pan), the first step in CoA biosynthesis. This chain is Type III pantothenate kinase, found in Desulfosudis oleivorans (strain DSM 6200 / JCM 39069 / Hxd3) (Desulfococcus oleovorans).